A 986-amino-acid chain; its full sequence is Anoctamin-1 (986 aa).

The Cytoplasmic segment spans residues 1–333 (MRVNEKYSTL…FGEKIGLYFA (333 aa)). Positions 79-121 (LVRRVQHSDTPSGARSVKQDHPLPGKGASLDAGSGEPPMDYHE) are disordered. S107 and S196 each carry phosphoserine. A helical membrane pass occupies residues 334–354 (WLGVYTQMLIPASIVGIIVFL). At 355–406 (YGCATMDENIPSMEMCDQRHNITMCPLCDKTCSYWKMSSACATARASHLFDN) the chain is on the extracellular side. Intrachain disulfides connect C370–C395, C379–C862, C382–C386, and C651–C656. Residues 407–427 (PATVFFSVFMALWAATFMEHW) form a helical membrane-spanning segment. Residue E425 coordinates Ca(2+). The Cytoplasmic segment spans residues 428-519 (KRKQMRLNYR…RDRFPAYLTN (92 aa)). The chain crosses the membrane as a helical span at residues 520 to 540 (LVSIIFMIAVTFAIVLGVIIY). At 541–568 (RISMAAALAMNSSPSVRSNIRVTVTATA) the chain is on the extracellular side. The helical transmembrane segment at 569–589 (VIINLVVIILLDEVYGCIARW) threads the bilayer. Residues 590–607 (LTKIEVPKTEKSFEERLI) lie on the Cytoplasmic side of the membrane. The helical transmembrane segment at 608–628 (FKAFLLKFVNSYTPIFYVAFF) threads the bilayer. Topologically, residues 629–657 (KGRFVGRPGDYVYIFRSFRMEECAPGGCL) are extracellular. The helical transmembrane segment at 658–678 (MELCIQLSIIMLGKQLIQNNL) threads the bilayer. N677, E680, E728, E731, E760, and D764 together coordinate Ca(2+). Residues 679 to 725 (FEIGIPKMKKLIRYLKLKQQSPPDHEECVKRKQRYEVDYNLEPFAGL) are Cytoplasmic-facing. 2 helical membrane-spanning segments follow: residues 726 to 746 (TPEY…VASF) and 747 to 767 (PLAP…DAKK). Over 768-784 (FVTELRRPVAVRAKDIG) the chain is Cytoplasmic. A helical membrane pass occupies residues 785-805 (IWYNILRGIGKLAVIINAFVI). Over 806-892 (SFTSDFIPRL…FWAVLAARLA (87 aa)) the chain is Extracellular. The N-linked (GlcNAc...) asparagine glycan is linked to N832. Residues 893–913 (FVIVFQNLVMFMSDFVDWVIP) form a helical membrane-spanning segment. Positions 909 and 914 each coordinate Ca(2+). At 914–986 (DIPKDISQQI…PSHAYHGGVL (73 aa)) the chain is on the cytoplasmic side. Residues 951-960 (KERQKDEPPC) show a composition bias toward basic and acidic residues. The interval 951-986 (KERQKDEPPCNHHNTKACPDSLGSPAPSHAYHGGVL) is disordered.

The protein belongs to the anoctamin family. Homodimer. Interacts with CFTR. Interacts with TRPV4. Expressed in nasal epithelial cells (at protein level). In the kidney, expressed in the collecting duct (at protein level). Broadly expressed with higher levels in liver, skeletal muscle and gastrointestinal muscles. Expressed in eccrine sweat glands.

The protein resides in the apical cell membrane. Its subcellular location is the presynapse. The catalysed reaction is chloride(in) = chloride(out). ATP and calmodulin are essential for its activation. Channel activity is inhibited by CFTR protein and by chloride inhibitors such as niflumic acid (NFA) and 4,4'-diisothiocyanatostilbene-2,2'-disulfonic acid (DIDS). Activated by heat with activation seen at temperatures above 44 degrees Celsius. Activated by BDNF in radial glial cells. Functionally, calcium-activated chloride channel (CaCC). Plays a role in transepithelial anion transport and smooth muscle contraction. Required for the normal functioning of the interstitial cells of Cajal (ICCs) which generate electrical pacemaker activity in gastrointestinal smooth muscles. Acts as a major contributor to basal and stimulated chloride conductance in airway epithelial cells and plays an important role in tracheal cartilage development. Required for CFTR activation by enhancing endoplasmic reticulum Ca(2+) store release and is also required for CFTR membrane expression. Required for basal and ATP-dependent mucus secretion in airways and intestine, probably by controlling exocytosis of mucus-filled granules by providing Ca(2+) to an apical signaling compartment. Contributes to airway mucus expression induced by interleukins IL3 and IL8 and by the asthma-associated protein CLCA1 and is required for expression of mucin MUC5AC. However, was shown in another study not to be required for MUC5AC expression. Plays a role in the propagation of Ca(2+) waves in Kolliker's organ in the cochlea and contributes to the refinement of auditory brainstem circuitries prior to hearing onset. In vomeronasal sensory neurons, modulates spontaneous firing patterns in the absence of stimuli as well as the firing pattern of pheromone-evoked activity. Responsible for calcium-activated chloride channel activity in type I taste cells of the vallate papillae. Acts as a heat sensor in nociceptive neurons. In dorsal root ganglion neurons, plays a role in mediating non-histaminergic Mas-related G-protein coupled receptor (MRGPR)-dependent itching, acting as a downstream effector of MRGPRs. In the developing brain, required for the Ca(2+)-dependent process extension of radial glial cells. Its function is as follows. Calcium-activated chloride channel (CaCC). Contributes to calcium-activated chloride secretion in human sweat gland epithelial cells. Shows increased basal chloride permeability and decreased Ca(2+)-induced chloride permeability. In terms of biological role, calcium-activated chloride channel (CaCC). Shows increased sensitivity to intracellular Ca(2+). The polypeptide is Anoctamin-1 (ANO1) (Homo sapiens (Human)).